A 582-amino-acid chain; its full sequence is Dihydroxy-acid dehydratase 3 (582 aa).

A [2Fe-2S] cluster-binding site is contributed by Cys-67. Asp-99 lines the Mg(2+) pocket. Cys-140 is a binding site for [2Fe-2S] cluster. Mg(2+)-binding residues include Asp-141 and Lys-142. Lys-142 carries the post-translational modification N6-carboxylysine. [2Fe-2S] cluster is bound at residue Cys-212. A Mg(2+)-binding site is contributed by Glu-462. The active-site Proton acceptor is Ser-488.

Belongs to the IlvD/Edd family. As to quaternary structure, homodimer. The cofactor is [2Fe-2S] cluster. Mg(2+) is required as a cofactor.

It catalyses the reaction (2R)-2,3-dihydroxy-3-methylbutanoate = 3-methyl-2-oxobutanoate + H2O. The catalysed reaction is (2R,3R)-2,3-dihydroxy-3-methylpentanoate = (S)-3-methyl-2-oxopentanoate + H2O. The protein operates within amino-acid biosynthesis; L-isoleucine biosynthesis; L-isoleucine from 2-oxobutanoate: step 3/4. It functions in the pathway amino-acid biosynthesis; L-valine biosynthesis; L-valine from pyruvate: step 3/4. Its function is as follows. Functions in the biosynthesis of branched-chain amino acids. Catalyzes the dehydration of (2R,3R)-2,3-dihydroxy-3-methylpentanoate (2,3-dihydroxy-3-methylvalerate) into 2-oxo-3-methylpentanoate (2-oxo-3-methylvalerate) and of (2R)-2,3-dihydroxy-3-methylbutanoate (2,3-dihydroxyisovalerate) into 2-oxo-3-methylbutanoate (2-oxoisovalerate), the penultimate precursor to L-isoleucine and L-valine, respectively. The protein is Dihydroxy-acid dehydratase 3 of Bradyrhizobium diazoefficiens (strain JCM 10833 / BCRC 13528 / IAM 13628 / NBRC 14792 / USDA 110).